Consider the following 500-residue polypeptide: Probable cytosol aminopeptidase (500 aa).

Positions 261 and 266 each coordinate Mn(2+). The active site involves K273. Mn(2+) is bound by residues D284, D343, and E345. R347 is a catalytic residue.

It belongs to the peptidase M17 family. Mn(2+) is required as a cofactor.

It localises to the cytoplasm. The catalysed reaction is Release of an N-terminal amino acid, Xaa-|-Yaa-, in which Xaa is preferably Leu, but may be other amino acids including Pro although not Arg or Lys, and Yaa may be Pro. Amino acid amides and methyl esters are also readily hydrolyzed, but rates on arylamides are exceedingly low.. It catalyses the reaction Release of an N-terminal amino acid, preferentially leucine, but not glutamic or aspartic acids.. Its function is as follows. Presumably involved in the processing and regular turnover of intracellular proteins. Catalyzes the removal of unsubstituted N-terminal amino acids from various peptides. In Wolbachia pipientis wMel, this protein is Probable cytosol aminopeptidase.